The chain runs to 175 residues: UPF0178 protein GOX1710 (175 aa).

This sequence belongs to the UPF0178 family.

The protein is UPF0178 protein GOX1710 of Gluconobacter oxydans (strain 621H) (Gluconobacter suboxydans).